The chain runs to 377 residues: Succinyl-diaminopimelate desuccinylase (377 aa).

H66 lines the Zn(2+) pocket. The active site involves D68. Residue D99 participates in Zn(2+) binding. The active-site Proton acceptor is the E133. Residues E134, E162, and H348 each contribute to the Zn(2+) site.

Belongs to the peptidase M20A family. DapE subfamily. As to quaternary structure, homodimer. The cofactor is Zn(2+). Co(2+) serves as cofactor.

The enzyme catalyses N-succinyl-(2S,6S)-2,6-diaminopimelate + H2O = (2S,6S)-2,6-diaminopimelate + succinate. It participates in amino-acid biosynthesis; L-lysine biosynthesis via DAP pathway; LL-2,6-diaminopimelate from (S)-tetrahydrodipicolinate (succinylase route): step 3/3. In terms of biological role, catalyzes the hydrolysis of N-succinyl-L,L-diaminopimelic acid (SDAP), forming succinate and LL-2,6-diaminopimelate (DAP), an intermediate involved in the bacterial biosynthesis of lysine and meso-diaminopimelic acid, an essential component of bacterial cell walls. The sequence is that of Succinyl-diaminopimelate desuccinylase from Bordetella avium (strain 197N).